We begin with the raw amino-acid sequence, 313 residues long: tRNA-cytidine(32) 2-sulfurtransferase (313 aa).

The short motif at 47 to 52 (SGGKDS) is the PP-loop motif element. Positions 122, 125, and 213 each coordinate [4Fe-4S] cluster. The disordered stretch occupies residues 288–313 (PVGWQPEDDEDTEKRPPVRLDVLEIK). A compositionally biased stretch (basic and acidic residues) spans 299 to 313 (TEKRPPVRLDVLEIK).

The protein belongs to the TtcA family. As to quaternary structure, homodimer. Requires Mg(2+) as cofactor. The cofactor is [4Fe-4S] cluster.

The protein resides in the cytoplasm. It catalyses the reaction cytidine(32) in tRNA + S-sulfanyl-L-cysteinyl-[cysteine desulfurase] + AH2 + ATP = 2-thiocytidine(32) in tRNA + L-cysteinyl-[cysteine desulfurase] + A + AMP + diphosphate + H(+). The protein operates within tRNA modification. In terms of biological role, catalyzes the ATP-dependent 2-thiolation of cytidine in position 32 of tRNA, to form 2-thiocytidine (s(2)C32). The sulfur atoms are provided by the cysteine/cysteine desulfurase (IscS) system. In Yersinia pseudotuberculosis serotype O:1b (strain IP 31758), this protein is tRNA-cytidine(32) 2-sulfurtransferase.